The primary structure comprises 742 residues: TBC1 domain family member 25 (742 aa).

Residues 1–22 form a disordered region; the sequence is MRPPAQARWEGQGPTAPLRLRS. Residue Ser-194 is modified to Phosphoserine. Phosphothreonine is present on Thr-214. Positions 282–488 constitute a Rab-GAP TBC domain; it reads GVEPSLRKVV…RMLEVTWSSL (207 aa). Ser-560 bears the Phosphoserine mark. The interval 592–664 is disordered; sequence SLSEPLLNSP…PPMGLPPPQE (73 aa). Low complexity predominate over residues 600-628; that stretch reads SPDPLLSTSSRPDSPSSSSPPSTQEASPS. Positions 649–663 are enriched in pro residues; the sequence is KPVPPPPPMGLPPPQ.

As to quaternary structure, interacts (via N-terminus) with MAP1LC3B, GABARAP and GABARAPL2.

It localises to the cytoplasm. The protein resides in the cytoplasmic vesicle. Its subcellular location is the autophagosome. Functionally, acts as a GTPase-activating protein specific for RAB33B. Involved in the regulation of autophagosome maturation, the process in which autophagosomes fuse with endosomes and lysosomes. The chain is TBC1 domain family member 25 (Tbc1d25) from Mus musculus (Mouse).